The sequence spans 97 residues: YcgL domain-containing protein Tcr_0238 (97 aa).

Positions 3–87 (LLVSAYKSAK…SEIEKMGDMP (85 aa)) constitute a YcgL domain. The disordered stretch occupies residues 78–97 (SEIEKMGDMPPPPEHLDNIF).

This is YcgL domain-containing protein Tcr_0238 from Hydrogenovibrio crunogenus (strain DSM 25203 / XCL-2) (Thiomicrospira crunogena).